Reading from the N-terminus, the 88-residue chain is DNA-directed RNA polymerase subunit omega (88 aa).

Belongs to the RNA polymerase subunit omega family. The RNAP catalytic core consists of 2 alpha, 1 beta, 1 beta' and 1 omega subunit. When a sigma factor is associated with the core the holoenzyme is formed, which can initiate transcription.

It carries out the reaction RNA(n) + a ribonucleoside 5'-triphosphate = RNA(n+1) + diphosphate. Functionally, promotes RNA polymerase assembly. Latches the N- and C-terminal regions of the beta' subunit thereby facilitating its interaction with the beta and alpha subunits. This is DNA-directed RNA polymerase subunit omega from Pseudomonas aeruginosa (strain LESB58).